The primary structure comprises 455 residues: N(5)-hydroxyornithine:cis-anhydromevalonyl coenzyme A-N(5)-transacylase SIDF (455 aa).

The short motif at 453-455 (PKL) is the PTS1-type peroxisomal targeting signal element.

It belongs to the lysine N-acyltransferase mbtK family.

The protein resides in the peroxisome. Its pathway is siderophore biosynthesis. Hydroxyornithine transacylase; part of the gene cluster that mediates the biosynthesis of at least 11 siderophores, including beauverichelin A, dimerumic acid (DA), Na-dimethyl coprogen (NADC), eleutherazine B, ferricrocin (FC), fusarinine A, fusarinine C (FsC), metachelin A, mevalonolactone, rhodotorulic acid (RA) and tenellin. This cocktail of siderophores for iron metabolism is essential for virulence, and more specifically for the fungal virulence in penetrating through the host cuticle. Siderophore synthesis is also involved in conidial germination under iron-deficient conditions. For biosynthesis of fusarinine C, the transacylase SIDF transfers anhydromevalonyl to N(5)-hydroxyornithine. The required anhydromevalonyl-CoA moiety is derived from mevalonate by CoA ligation and dehydration catalyzed by SIDI and sidH respectively. This chain is N(5)-hydroxyornithine:cis-anhydromevalonyl coenzyme A-N(5)-transacylase SIDF, found in Beauveria bassiana (strain ARSEF 2860) (White muscardine disease fungus).